Here is a 194-residue protein sequence, read N- to C-terminus: Peptidyl-tRNA hydrolase (194 aa).

Tyr-16 is a binding site for tRNA. His-21 acts as the Proton acceptor in catalysis. Residues Tyr-67, Asn-69, and Asn-115 each contribute to the tRNA site.

Belongs to the PTH family. In terms of assembly, monomer.

It is found in the cytoplasm. The catalysed reaction is an N-acyl-L-alpha-aminoacyl-tRNA + H2O = an N-acyl-L-amino acid + a tRNA + H(+). Functionally, hydrolyzes ribosome-free peptidyl-tRNAs (with 1 or more amino acids incorporated), which drop off the ribosome during protein synthesis, or as a result of ribosome stalling. Its function is as follows. Catalyzes the release of premature peptidyl moieties from peptidyl-tRNA molecules trapped in stalled 50S ribosomal subunits, and thus maintains levels of free tRNAs and 50S ribosomes. The chain is Peptidyl-tRNA hydrolase from Synechocystis sp. (strain ATCC 27184 / PCC 6803 / Kazusa).